The sequence spans 732 residues: Elongation factor 2 (732 aa).

A tr-type G domain is found at 19–228 (ELVRNIGIVA…TKITFKDIVE (210 aa)). Residues 28–35 (AHIDHGKT), 94–98 (DTPGH), and 148–151 (NKID) contribute to the GTP site. His-598 is modified (diphthamide).

Belongs to the TRAFAC class translation factor GTPase superfamily. Classic translation factor GTPase family. EF-G/EF-2 subfamily.

Its subcellular location is the cytoplasm. Functionally, catalyzes the GTP-dependent ribosomal translocation step during translation elongation. During this step, the ribosome changes from the pre-translocational (PRE) to the post-translocational (POST) state as the newly formed A-site-bound peptidyl-tRNA and P-site-bound deacylated tRNA move to the P and E sites, respectively. Catalyzes the coordinated movement of the two tRNA molecules, the mRNA and conformational changes in the ribosome. This chain is Elongation factor 2, found in Thermoplasma volcanium (strain ATCC 51530 / DSM 4299 / JCM 9571 / NBRC 15438 / GSS1).